We begin with the raw amino-acid sequence, 274 residues long: Large ribosomal subunit protein uL2 (274 aa).

Residues 223–256 (VVMNPVDHPHGGGEGKTGEGRHPVDPWGNLTKGY) are disordered. Residues 229-246 (DHPHGGGEGKTGEGRHPV) show a composition bias toward basic and acidic residues.

Belongs to the universal ribosomal protein uL2 family. In terms of assembly, part of the 50S ribosomal subunit. Forms a bridge to the 30S subunit in the 70S ribosome.

In terms of biological role, one of the primary rRNA binding proteins. Required for association of the 30S and 50S subunits to form the 70S ribosome, for tRNA binding and peptide bond formation. It has been suggested to have peptidyltransferase activity; this is somewhat controversial. Makes several contacts with the 16S rRNA in the 70S ribosome. The sequence is that of Large ribosomal subunit protein uL2 from Albidiferax ferrireducens (strain ATCC BAA-621 / DSM 15236 / T118) (Rhodoferax ferrireducens).